Reading from the N-terminus, the 222-residue chain is Cytochrome b6-f complex iron-sulfur subunit, chloroplastic (222 aa).

Residues 1–49 (MASTALSTASNPTQLCRTRASSLCKPVKGLGFGRERIPRNITCMAGSIS) constitute a chloroplast transit peptide. Residues 66–86 (LLGAISLPTFGMLVPYGSFLV) form a helical membrane-spanning segment. Residues 109 to 205 (VEDWLKTHGP…ADVDDGKVVF (97 aa)) form the Rieske domain. 4 residues coordinate [2Fe-2S] cluster: C151, H153, C169, and H172. A disulfide bond links C156 and C171.

This sequence belongs to the Rieske iron-sulfur protein family. The 4 large subunits of the cytochrome b6-f complex are cytochrome b6, subunit IV (17 kDa polypeptide, petD), cytochrome f and the Rieske protein, while the 4 small subunits are petG, petL, petM and petN. The complex functions as a dimer. [2Fe-2S] cluster is required as a cofactor.

Its subcellular location is the plastid. It localises to the chloroplast thylakoid membrane. The catalysed reaction is 2 oxidized [plastocyanin] + a plastoquinol + 2 H(+)(in) = 2 reduced [plastocyanin] + a plastoquinone + 4 H(+)(out). In terms of biological role, component of the cytochrome b6-f complex, which mediates electron transfer between photosystem II (PSII) and photosystem I (PSI), cyclic electron flow around PSI, and state transitions. The chain is Cytochrome b6-f complex iron-sulfur subunit, chloroplastic (petC) from Triticum aestivum (Wheat).